A 92-amino-acid polypeptide reads, in one-letter code: Transcriptional regulator WhiB1 (92 aa).

In terms of domain architecture, 4Fe-4S Wbl-type spans alanine 12 to alanine 74. [4Fe-4S] cluster contacts are provided by cysteine 13, cysteine 41, cysteine 44, and cysteine 50.

Belongs to the WhiB family. It depends on [4Fe-4S] cluster as a cofactor. Post-translationally, the Fe-S cluster can be nitrosylated by nitric oxide (NO). In terms of processing, upon Fe-S cluster removal intramolecular disulfide bonds are formed.

The protein resides in the cytoplasm. Its function is as follows. Acts as a transcriptional regulator. Probably redox-responsive. The apo- but not holo-form probably binds DNA. This Bifidobacterium longum (strain NCC 2705) protein is Transcriptional regulator WhiB1 (whiB1).